The chain runs to 67 residues: MLLLSAVKTLLLAWLGIVLVFMSIIKSAMLDFLQEAGKLEGIETYKKEAQTSFMAPSWALGHLMGRK.

The N-terminal stretch at 1–30 is a signal peptide; that stretch reads MLLLSAVKTLLLAWLGIVLVFMSIIKSAML. Residues 31-49 constitute a propeptide that is removed on maturation; sequence DFLQEAGKLEGIETYKKEA. A Pyrrolidone carboxylic acid modification is found at Gln-50. Methionine amide is present on Met-64.

Expressed by the skin glands.

The protein resides in the secreted. Its function is as follows. Stimulates smooth muscle contraction in isolated rat stomach strip. The chain is Bombesin from Rana shuchinae (Sichuan frog).